Here is a 120-residue protein sequence, read N- to C-terminus: Small ribosomal subunit protein uS13m (120 aa).

This sequence belongs to the universal ribosomal protein uS13 family. As to quaternary structure, part of the small ribosomal subunit.

Its subcellular location is the mitochondrion. Functionally, located at the top of the head of the small subunit, it contacts several helices of the 18S rRNA. This is Small ribosomal subunit protein uS13m (RPS13) from Marchantia polymorpha (Common liverwort).